Consider the following 321-residue polypeptide: Transmembrane protein fend (321 aa).

The first 18 residues, 1-18 (MFHSLVLMACALAALSVA), serve as a signal peptide directing secretion. The Extracellular portion of the chain corresponds to 19–261 (QGAGSARSKS…ALPTPSELGG (243 aa)). The chain crosses the membrane as a helical span at residues 262-282 (VVYPAFGALAFFLALLVMFLF). Over 283-321 (LRPQRKRFPLDADSADTATLIGRSSSSSRNSMDASTLHV) the chain is Cytoplasmic.

It localises to the membrane. In terms of biological role, involved in the normal targeting of ventral muscle, muscle 12, by motoneurons. May function as an axon guidance molecule involved in neuromuscular specificity. The sequence is that of Transmembrane protein fend (fend) from Drosophila melanogaster (Fruit fly).